Reading from the N-terminus, the 221-residue chain is Molybdenum cofactor guanylyltransferase (221 aa).

GTP is bound by residues 18–20 (IAG), Lys35, Asn63, Asp81, and Asp112. Asp112 is a Mg(2+) binding site.

It belongs to the MobA family. Monomer. The cofactor is Mg(2+).

It is found in the cytoplasm. It catalyses the reaction Mo-molybdopterin + GTP + H(+) = Mo-molybdopterin guanine dinucleotide + diphosphate. In terms of biological role, transfers a GMP moiety from GTP to Mo-molybdopterin (Mo-MPT) cofactor (Moco or molybdenum cofactor) to form Mo-molybdopterin guanine dinucleotide (Mo-MGD) cofactor. The sequence is that of Molybdenum cofactor guanylyltransferase from Brucella melitensis biotype 2 (strain ATCC 23457).